Reading from the N-terminus, the 439-residue chain is Probable guanine deaminase (439 aa).

Zn(2+) is bound by residues His76 and His78. Residues 78 to 81, 203 to 204, 231 to 234, and Asp321 each bind substrate; these read HYPQ, RF, and HINE. Zn(2+) is bound by residues His231 and Asp321.

It belongs to the metallo-dependent hydrolases superfamily. ATZ/TRZ family. Zn(2+) is required as a cofactor.

It catalyses the reaction guanine + H2O + H(+) = xanthine + NH4(+). It functions in the pathway purine metabolism; guanine degradation; xanthine from guanine: step 1/1. In terms of biological role, catalyzes the hydrolytic deamination of guanine, producing xanthine and ammonia. The chain is Probable guanine deaminase (guaD) from Deinococcus radiodurans (strain ATCC 13939 / DSM 20539 / JCM 16871 / CCUG 27074 / LMG 4051 / NBRC 15346 / NCIMB 9279 / VKM B-1422 / R1).